Consider the following 452-residue polypeptide: AP-4 complex subunit mu-1 (452 aa).

The MHD domain maps to 184 to 451; the sequence is KNEVFLDVVE…LSHSDAYVIR (268 aa).

Belongs to the adaptor complexes medium subunit family. Adaptor protein complex 4 (AP-4) is a heterotetramer composed of two large adaptins (epsilon-type subunit AP4E1 and beta-type subunit AP4B1), a medium adaptin (mu-type subunit AP4M1) and a small adaptin (sigma-type AP4S1). Interacts with tyrosine-based sorting signals on the cytoplasmic tail of cargo proteins such as APP, ATG9A, LAMP2 and NAGPA. Interacts with the C-terminal domain of GRID2. Interacts with GRIA1 and GRIA2; the interaction is indirect via CACNG3. Interacts with CACNG3; CACNG3 associates GRIA1 and GRIA2 with the adaptor protein complex 4 (AP-4) to target them to the somatodendritic compartment of neurons. Interacts with HOOK1 and HOOK2; the interactions are direct, mediate the interaction between FTS-Hook-FHIP (FHF) complex and AP-4 and the perinuclear distribution of AP-4.

Its subcellular location is the golgi apparatus. It localises to the trans-Golgi network membrane. The protein resides in the early endosome. Component of the adaptor protein complex 4 (AP-4). Adaptor protein complexes are vesicle coat components involved both in vesicle formation and cargo selection. They control the vesicular transport of proteins in different trafficking pathways. AP-4 forms a non clathrin-associated coat on vesicles departing the trans-Golgi network (TGN) and may be involved in the targeting of proteins from the trans-Golgi network (TGN) to the endosomal-lysosomal system. It is also involved in protein sorting to the basolateral membrane in epithelial cells and the proper asymmetric localization of somatodendritic proteins in neurons. Within AP-4, the mu-type subunit AP4M1 is directly involved in the recognition and binding of tyrosine-based sorting signals found in the cytoplasmic part of cargos. The adaptor protein complex 4 (AP-4) may also recognize other types of sorting signal. The sequence is that of AP-4 complex subunit mu-1 from Canis lupus familiaris (Dog).